A 539-amino-acid polypeptide reads, in one-letter code: MWRVPRRLCVQSVKTSKLSGPWSRPAAHMSTLLIHHPQYAWLQDLGLREDNEGVYNGSWGGRGEVITTYCPANNEPIARVRQASLKDYEETIGKAKKAWNIWADIPAPKRGEIVRKIGDAFREKIQLLGRLVSLEMGKILVEGIGEVQEYVDVCDYAAGLSRMIGGPTLPSERPGHALIEMWNPLGLVGIITAFNFPVAVFGWNNAIALITGNVCLWKGAPTTSLVSVAVTKIIAQVLEDNLLPGAICSLVCGGADIGTTMARDERVNLLSFTGSTQVGKEVALMVQERFGKSLLELGGNNAIIAFEDADLSLVVPSVLFAAVGTAGQRCTTVRRLFLHESIHNEVVDRLRSAYSQIRVGNPWDPNILYGPLHTKQAVSMFVRAVEEAKKQGGTVVYGGKVMDHPGNYVEPTIVTGLAHDAPIVHQETFAPILYVFKFQDEEEVFEWNNEVKQGLSSSIFTKDLGRIFRWLGPKGSDCGIVNVNIPTSGAEIGGAFGGEKHTGGGRESGSDAWKQYMRRSTCTINYSTSLPLAQGIKFQ.

The transit peptide at M1 to A26 directs the protein to the mitochondrion. 3 positions are modified to N6-acetyllysine; alternate: K86, K94, and K97. N6-succinyllysine; alternate is present on residues K86, K94, and K97. Residues T192–F194, K218, G258–T259, G274–S275, G274–G279, and E296–L297 each bind NAD(+). The Proton acceptor role is filled by E296. The active-site Nucleophile is C330. T331 is a (S)-2-amino-6-oxohexanoate binding site. E427 contributes to the NAD(+) binding site. At K462 the chain carries N6-acetyllysine. Residues G489 and A490 each coordinate (S)-2-amino-6-oxohexanoate. Position 500 is an N6-acetyllysine (K500). K537 carries the post-translational modification N6-succinyllysine.

This sequence belongs to the aldehyde dehydrogenase family. Homotetramer. As to expression, present in liver, kidney, brain and pancreas, and at lower levels in jejunum, duodenum, stomach and testes (at protein level).

Its subcellular location is the cytoplasm. It is found in the cytosol. It localises to the nucleus. The protein localises to the mitochondrion. The catalysed reaction is nonanal + NAD(+) + H2O = nonanoate + NADH + 2 H(+). The enzyme catalyses (S)-2-amino-6-oxohexanoate + NAD(+) + H2O = L-2-aminoadipate + NADH + 2 H(+). It catalyses the reaction betaine aldehyde + NAD(+) + H2O = glycine betaine + NADH + 2 H(+). It carries out the reaction an aldehyde + NAD(+) + H2O = a carboxylate + NADH + 2 H(+). The catalysed reaction is hexanal + NAD(+) + H2O = hexanoate + NADH + 2 H(+). The enzyme catalyses octanal + NAD(+) + H2O = octanoate + NADH + 2 H(+). It catalyses the reaction (E)-non-2-enal + NAD(+) + H2O = (E)-non-2-enoate + NADH + 2 H(+). It carries out the reaction (E)-4-hydroxynon-2-enal + NAD(+) + H2O = (E)-4-hydroxynon-2-enoate + NADH + 2 H(+). Its pathway is amine and polyamine biosynthesis; betaine biosynthesis via choline pathway; betaine from betaine aldehyde: step 1/1. Functionally, multifunctional enzyme mediating important protective effects. Metabolizes betaine aldehyde to betaine, an important cellular osmolyte and methyl donor. Protects cells from oxidative stress by metabolizing a number of lipid peroxidation-derived aldehydes. Involved in lysine catabolism. The protein is Alpha-aminoadipic semialdehyde dehydrogenase of Mus musculus (Mouse).